Consider the following 1036-residue polypeptide: MMKFRFRRQGADPQREKLKQELFTFHKTVEHGFPNQPSALAFDPELRIMAIGTRSGAVKIYGAPGVEFTGLHRDAATVTQMHFLPGQGRLLTLLDDSSLHLWEIIQRNGCAHLEEGLSFHPPSRPSFGNASFPAGLTRVTVVLLAAGDTVVLGTESGSIFFLDVATLALLEGQTLSPDEVLRSVPDDYRCGKALGPVESLQGHLQDPSKILIGYSRGLLVIWSQATQSVEHVFLGNQQLESLCWGRGGSNIISSHSDGSYAIWSTDTGSPPTLQPTVVTTPYGPFPCKAINKILWRSCESGDHFIIFSGGMPRASYGDRHCVSVLRAETLVTLDFTSRVIDFFTVHSTQPEDGFDNPQALAVLLEEELVVLDLQTPGWPAVPAPYLAPLHSSAITCSAHVANVPSKLWARIVSAGERQSPQPASSALSWPITGGRNLAQEPSQRGLLLTGHEDGTVRFWDASGVALRPLYKLSTAGLFQTDCEHADSLAQAVEDDWPPFRKVGCFDPYSDDPRLGIQKVALCKYTAQMVVAGTAGQVLVLELSDVPGEHTVSVASVDLLQDREGFTWKGHERLSPHTGPLPWPAGFQPRVLIQCLPPAAVTAVALHAEWSLVAFGTSHGFGLFDYQRKSPVLARCTLHPNDSLAMEGPLSRVKSLKKSLRQSFRRIRKSRVSGKKRATTASSKLQEANAQLAEQTCPHDVEMTPVQRRIEPRSADDSLSGVVRCLYFADTFLRDATHHGPTMWAGTNSGSVFAYALEVPAATAGGEKRPEQAVEAVLGKEVQLMHRAPVVAIAVLDGRGRPLPEPYEASRDLAQAPDMQGGHAVLIASEEQFKVFTLPKVSAKTKFKLTAHEGCRVRKVALATFASVMSEDYAETCLACLTNLGDVHVFSVPGLRPQVHYSCIRKEDISGIASCVFTRHGQGFYLISPSEFERFSLSARNITEPLCSLDISWPQNATQPRLQESPKLSQANGTRDIILAPESCEGSPSSAHSKRADTMEPPEAALSPVSIDSAASGDTMLDTTGDVTVEYVKDFLG.

10 WD repeats span residues 38 to 71 (SALA…FTGL), 78 to 119 (VTQM…GLSF), 139 to 175 (VTVV…GQTL), 199 to 233 (SLQG…EHVF), 239 to 271 (LESL…GSPP), 289 to 331 (AINK…ETLV), 339 to 373 (VIDF…VLDL), 395 to 473 (TCSA…YKLS), 517 to 592 (QKVA…RVLI), and 601 to 662 (TAVA…LRQS). S662 is subject to Phosphoserine. Positions 670–694 (RVSGKKRATTASSKLQEANAQLAEQ) are disordered. A compositionally biased stretch (polar residues) spans 678–693 (TTASSKLQEANAQLAE). WD repeat units follow at residues 722–782 (VRCL…KEVQ), 791–843 (AIAV…VSAK), 848–901 (LTAH…VHYS), and 915–938 (VFTR…SLSA). T957 is subject to Phosphothreonine. A phosphoserine mark is found at S964, S982, and S989. The interval 980 to 1002 (PESCEGSPSSAHSKRADTMEPPE) is disordered.

It belongs to the WD repeat L(2)GL family. In terms of assembly, associated with nonmuscle myosin II heavy chain. Interacts with PRKCI/aPKC, PARD6B/Par-6 and PARD6A. Interacts with STX4A. Interacts with DCAF1. Interacts with RAB10 (GDP-bound form); the interaction is direct and promotes RAB10 association with membranes and activation through competition with the Rab inhibitor GDI1. Post-translationally, phosphorylated by PRKCI. Expressed at high level in the testis and at lower level in ovary, brain, spleen and kidney.

The protein localises to the early endosome membrane. Its subcellular location is the golgi apparatus. It is found in the trans-Golgi network membrane. The protein resides in the golgi apparatus membrane. It localises to the cell projection. The protein localises to the axon. Its subcellular location is the cytoplasm. It is found in the cytoskeleton. Functionally, cortical cytoskeleton protein found in a complex involved in maintaining cell polarity and epithelial integrity. Involved in the regulation of mitotic spindle orientation, proliferation, differentiation and tissue organization of neuroepithelial cells. Involved in axonogenesis through RAB10 activation thereby regulating vesicular membrane trafficking toward the axonal plasma membrane. This chain is Lethal(2) giant larvae protein homolog 1 (Llgl1), found in Rattus norvegicus (Rat).